Reading from the N-terminus, the 684-residue chain is Glycine--tRNA ligase beta subunit (684 aa).

The protein belongs to the class-II aminoacyl-tRNA synthetase family. In terms of assembly, tetramer of two alpha and two beta subunits.

The protein resides in the cytoplasm. It carries out the reaction tRNA(Gly) + glycine + ATP = glycyl-tRNA(Gly) + AMP + diphosphate. The chain is Glycine--tRNA ligase beta subunit from Pseudomonas putida (strain ATCC 47054 / DSM 6125 / CFBP 8728 / NCIMB 11950 / KT2440).